A 429-amino-acid chain; its full sequence is Methanol:N,N-dimethyl-4-nitrosoaniline oxidoreductase (429 aa).

This sequence belongs to the iron-containing alcohol dehydrogenase family. As to quaternary structure, homodecamer. Requires Mg(2+) as cofactor. It depends on Zn(2+) as a cofactor. The cofactor is NADPH.

The enzyme catalyses methanol + A = formaldehyde + AH2. Its activity is regulated as follows. Inhibited by azide and hydrazine. Functionally, catalyzes the oxidation of methanol to yield formaldehyde. While the in vivo electron acceptor is not known, N,N-dimethyl-4-nitrosoaniline (NDMA) can serve this function in vitro and is reduced to 4-(hydroxylamino)-N,N-dimethylaniline. It can also use various other primary alcohols, polyols and formaldehyde. In addition, MNO is able to produce methylformate from methanol plus formaldehyde, and possesses a formaldehyde dismutase and a NADH-dependent formaldehyde reductase activity. This is Methanol:N,N-dimethyl-4-nitrosoaniline oxidoreductase (mno) from Amycolatopsis methanolica.